Consider the following 586-residue polypeptide: Clathrin heavy chain linker domain-containing protein 1 (586 aa).

The stretch at 174–232 forms a coiled coil; that stretch reads MNLDALTKYMKHLEDKYAEIKQAMLIKYVPAQRKADLDEEMIVLLKRRDVAENLNKKLQ.

The sequence is that of Clathrin heavy chain linker domain-containing protein 1 (CLHC1) from Homo sapiens (Human).